The chain runs to 1072 residues: Teashirt homolog 3 (1072 aa).

Disordered regions lie at residues 44-71 (ACPS…SETS), 130-153 (PSSE…CGSG), and 228-247 (HYRD…WSKP). The span at 57-71 (SSHEMDSESHISETS) shows a compositional bias: basic and acidic residues. C2H2-type zinc fingers lie at residues 204-228 (FRCK…ETGH) and 265-289 (LKCM…KTKH). Residues 228-237 (HYRDDNHETD) show a composition bias toward basic and acidic residues. The segment at 315–336 (SLELELPSSPDSTGGTPKATLS) is disordered. Residues 376 to 400 (LKCMECGSSHDTLQELTAHMMVTGH) form a C2H2-type 3; atypical zinc finger. The span at 469–481 (AVLDEKPKEKEKA) shows a compositional bias: basic and acidic residues. 5 disordered regions span residues 469–489 (AVLD…EKYD), 569–594 (NSEI…PMPK), 616–690 (EKMK…PLSG), 784–815 (TKGK…TVTT), and 846–888 (TESH…RQSN). Composition is skewed to polar residues over residues 571–593 (EIVS…SPMP) and 649–660 (SSGSGFKSQENS). A Phosphoserine modification is found at serine 672. Low complexity-rich tracts occupy residues 791 to 815 (GCSL…TVTT) and 847 to 860 (ESHT…SSIS). Positions 882–952 (RKGRQSNWNP…NVKYQLRRTG (71 aa)) form a DNA-binding region, homeobox; atypical. 2 consecutive C2H2-type zinc fingers follow at residues 967-989 (FFCN…LESH) and 1032-1055 (YQCK…SKTH).

This sequence belongs to the teashirt C2H2-type zinc-finger protein family. In terms of assembly, interacts (via N-terminus) with HDAC1 and HDAC2; the interaction is direct. Found in a trimeric complex with APBB1 and HDAC1; the interaction between HDAC1 and APBB1 is mediated by TSHZ3. Interacts (via homeobox domain) with APBB1 (via PID domain 1). In terms of tissue distribution, expressed in cortical neurons.

The protein resides in the nucleus. It localises to the cell projection. The protein localises to the growth cone. Transcriptional regulator involved in developmental processes. Functions in association with APBB1, SET and HDAC factors as a transcriptional repressor, that inhibits the expression of CASP4. TSHZ3-mediated transcription repression involves the recruitment of histone deacetylases HDAC1 and HDAC2. Associates with chromatin in a region surrounding the CASP4 transcriptional start site(s). Regulates the development of neurons involved in both respiratory rhythm and airflow control. Promotes maintenance of nucleus ambiguus (nA) motoneurons, which govern upper airway function, and establishes a respiratory rhythm generator (RRG) activity compatible with survival at birth. Involved in the differentiation of the proximal uretic smooth muscle cells during developmental processes. Involved in the up-regulation of myocardin, that directs the expression of smooth muscle cells in the proximal ureter. Involved in the modulation of glutamatergic synaptic transmission and long-term synaptic potentiation. The chain is Teashirt homolog 3 (Tshz3) from Rattus norvegicus (Rat).